A 212-amino-acid chain; its full sequence is ATP-dependent dethiobiotin synthetase BioD (212 aa).

An ATP-binding site is contributed by 12 to 17 (DCGKTF). Thr-16 serves as a coordination point for Mg(2+). Lys-33 is an active-site residue. Ser-37 lines the substrate pocket. Residues Asp-50, 110 to 113 (EGAG), and 170 to 171 (NC) each bind ATP. Residues Asp-50 and Glu-110 each coordinate Mg(2+).

It belongs to the dethiobiotin synthetase family. As to quaternary structure, homodimer. Requires Mg(2+) as cofactor.

The protein resides in the cytoplasm. It carries out the reaction (7R,8S)-7,8-diammoniononanoate + CO2 + ATP = (4R,5S)-dethiobiotin + ADP + phosphate + 3 H(+). It participates in cofactor biosynthesis; biotin biosynthesis; biotin from 7,8-diaminononanoate: step 1/2. Catalyzes a mechanistically unusual reaction, the ATP-dependent insertion of CO2 between the N7 and N8 nitrogen atoms of 7,8-diaminopelargonic acid (DAPA, also called 7,8-diammoniononanoate) to form a ureido ring. The polypeptide is ATP-dependent dethiobiotin synthetase BioD (Legionella pneumophila (strain Corby)).